The following is a 180-amino-acid chain: MMLSQIASKQAENGERAGSPDVLRCSSQMDCKPRFDLSSKGHRKDSDKSRNRKEDDSLAEASHSKKTVKKVVVVEQNGSFQVKIPKNFICEHCFGAFRSSYHLKRHVLIHTGEKPFECDVCDMRFIQKYHLERHKRVHSGEKPYQCERCHQCFSRTDRLLRHKRMCQGCQSKTSEGQFSL.

Residues 1-11 are compositionally biased toward polar residues; sequence MMLSQIASKQA. A disordered region spans residues 1–62; it reads MMLSQIASKQ…KEDDSLAEAS (62 aa). A Glycyl lysine isopeptide (Lys-Gly) (interchain with G-Cter in SUMO2) cross-link involves residue K9. S19 carries the post-translational modification Phosphoserine. The span at 31–56 shows a compositional bias: basic and acidic residues; the sequence is CKPRFDLSSKGHRKDSDKSRNRKEDD. 2 consecutive C2H2-type zinc fingers follow at residues 88–110 and 116–138; these read FICE…VLIH and FECD…KRVH. Residues 144–166 form a C2H2-type 3; atypical zinc finger; that stretch reads YQCERCHQCFSRTDRLLRHKRMC.

It belongs to the krueppel C2H2-type zinc-finger protein family.

Its subcellular location is the nucleus. May be involved in transcriptional regulation. The protein is Zinc finger protein 740 (Znf740) of Mus musculus (Mouse).